Consider the following 287-residue polypeptide: Protease HtpX (287 aa).

2 consecutive transmembrane segments (helical) span residues 4-24 and 36-56; these read IMLF…VLNI and LSGL…ISLM. Residue His-143 coordinates Zn(2+). The active site involves Glu-144. A Zn(2+)-binding site is contributed by His-147. The next 2 helical transmembrane spans lie at 158 to 178 and 192 to 212; these read LMQG…ANIV and MVYF…ASFI. Glu-221 contacts Zn(2+).

This sequence belongs to the peptidase M48B family. It depends on Zn(2+) as a cofactor.

The protein resides in the cell inner membrane. This Vibrio parahaemolyticus serotype O3:K6 (strain RIMD 2210633) protein is Protease HtpX.